A 264-amino-acid chain; its full sequence is MRIDVVTLFPELFEGFLAIGMVGRALASGALAVRTRSPREFGLGRHRSVDDTPYGGGSGMVMRVDCIVRCLEALDEAAAEGVASSAPPGADATASSGPLPRAHRVLLTPQGQPFRQEKAIELAARPAVALVCGRYEGFDERVRAFVDEEISLGDFVMTGGEVAAMAVIDACVRLLPGVLGNAVSAEHESHSPALAGLLEYPQYTRPVEFRGHKVPDVLQQGNHAAIARWRRAEAELRTAQRRPDLWRKARGGEPPADESGEVRR.

Residues Gly133 and 152 to 157 each bind S-adenosyl-L-methionine; that span reads LGDFVM. Over residues 240 to 251 the composition is skewed to basic and acidic residues; the sequence is QRRPDLWRKARG. Residues 240 to 264 are disordered; it reads QRRPDLWRKARGGEPPADESGEVRR. Acidic residues predominate over residues 255–264; the sequence is PADESGEVRR.

It belongs to the RNA methyltransferase TrmD family. As to quaternary structure, homodimer.

It localises to the cytoplasm. The enzyme catalyses guanosine(37) in tRNA + S-adenosyl-L-methionine = N(1)-methylguanosine(37) in tRNA + S-adenosyl-L-homocysteine + H(+). In terms of biological role, specifically methylates guanosine-37 in various tRNAs. This chain is tRNA (guanine-N(1)-)-methyltransferase, found in Sorangium cellulosum (strain So ce56) (Polyangium cellulosum (strain So ce56)).